The following is a 131-amino-acid chain: Histone H2A.1 (131 aa).

Ser-2 is modified (N-acetylserine). N6-acetyllysine is present on residues Lys-5 and Lys-8. Residue Gln-106 is modified to N5-methylglutamine. Ser-128 bears the Phosphoserine mark. The [ST]-Q motif motif lies at Ser-128 to Gln-129.

It belongs to the histone H2A family. In terms of assembly, the nucleosome is a histone octamer containing two molecules each of H2A, H2B, H3 and H4 assembled in one H3-H4 heterotetramer and two H2A-H2B heterodimers. The octamer wraps approximately 147 bp of DNA. Phosphorylated to form H2AS128ph (gamma-H2A) in response to DNA double-strand breaks (DSBs) generated by exogenous genotoxic agents and by stalled replication forks. Phosphorylation is dependent on the DNA damage checkpoint kinases MEC1/ATR and TEL1/ATM, spreads on either side of a detected DSB site and may mark the surrounding chromatin for recruitment of proteins required for DNA damage signaling and repair. Gamma-H2A is removed from the DNA prior to the strand invasion-primer extension step of the repair process and subsequently dephosphorylated by PPH3, a component of the histone H2A phosphatase complex (HTP-C). Dephosphorylation is necessary for efficient recovery from the DNA damage checkpoint. In terms of processing, acetylated by ESA1 to form H2AK4ac and H2AK7ac.

The protein localises to the nucleus. It is found in the chromosome. Its function is as follows. Core component of nucleosome which plays a central role in DNA double strand break (DSB) repair. Nucleosomes wrap and compact DNA into chromatin, limiting DNA accessibility to the cellular machineries which require DNA as a template. Histones thereby play a central role in transcription regulation, DNA repair, DNA replication and chromosomal stability. DNA accessibility is regulated via a complex set of post-translational modifications of histones, also called histone code, and nucleosome remodeling. In Candida glabrata (strain ATCC 2001 / BCRC 20586 / JCM 3761 / NBRC 0622 / NRRL Y-65 / CBS 138) (Yeast), this protein is Histone H2A.1 (HTA1).